An 837-amino-acid chain; its full sequence is V-type proton ATPase 116 kDa subunit a 1 (837 aa).

The Cytoplasmic portion of the chain corresponds to 1–388; it reads MGELFRSEEM…DAYGIGTYRE (388 aa). A phosphothreonine mark is found at T250 and T360. Y364 is modified (phosphotyrosine). A helical transmembrane segment spans residues 389 to 407; that stretch reads INPAPYTIITFPFLFAVMF. At 408-409 the chain is on the vacuolar side; the sequence is GD. The chain crosses the membrane as a helical span at residues 410-426; sequence FGHGILMTLFAVWMVLR. Residues 427–441 lie on the Cytoplasmic side of the membrane; that stretch reads ESRILSQKNENEMFS. The chain crosses the membrane as a helical span at residues 442–471; that stretch reads TVFSGRYIILLMGVFSMYTGLIYNDCFSKS. At 472-534 the chain is on the vacuolar side; it reads LNIFGSSWSV…ATNKLTFLNS (63 aa). N-linked (GalNAc...) asparagine glycosylation is present at N488. The chain crosses the membrane as a helical span at residues 535-554; the sequence is FKMKMSVILGIIHMLFGVSL. The Cytoplasmic portion of the chain corresponds to 555 to 572; the sequence is SLFNHIYFKKPLNIYFGF. The helical transmembrane segment at 573–593 threads the bilayer; sequence IPEIIFMTSLFGYLVILIFYK. Residues 594–638 lie on the Vacuolar side of the membrane; it reads WTAYDAHTSENAPSLLIHFINMFLFSYPESGYSMLYSGQKGIQCF. The chain crosses the membrane as a helical span at residues 639–658; the sequence is LVVVALLCVPWMLLFKPLVL. The Cytoplasmic segment spans residues 659–724; that stretch reads RRQYLRRKHL…DTMVHQAIHT (66 aa). Residues 725–749 traverse the membrane as a helical segment; the sequence is IEYCLGCISNTASYLRLWALSLAHA. Over 750 to 770 the chain is Vacuolar; that stretch reads QLSEVLWTMVIHIGLSVKSLA. A helical membrane pass occupies residues 771–809; that stretch reads GGLVLFFFFTAFATLTVAILLIMEGLSAFLHALRLHWVE. Residues 810 to 837 lie on the Cytoplasmic side of the membrane; that stretch reads FQNKFYSGTGFKFLPFSFEHIREGKFEE.

This sequence belongs to the V-ATPase 116 kDa subunit family. As to quaternary structure, V-ATPase is a heteromultimeric enzyme made up of two complexes: the ATP-hydrolytic V1 complex and the proton translocation V0 complex. The V1 complex consists of three catalytic AB heterodimers that form a heterohexamer, three peripheral stalks each consisting of EG heterodimers, one central rotor including subunits D and F, and the regulatory subunits C and H. The proton translocation complex V0 consists of the proton transport subunit a, a ring of proteolipid subunits c9c'', rotary subunit d, subunits e and f, and the accessory subunits ATP6AP1/Ac45 and ATP6AP2/PRR. Interacts with SPAAR.

The protein resides in the cytoplasmic vesicle. It localises to the clathrin-coated vesicle membrane. It is found in the secretory vesicle. Its subcellular location is the synaptic vesicle membrane. The protein localises to the melanosome. Subunit of the V0 complex of vacuolar(H+)-ATPase (V-ATPase), a multisubunit enzyme composed of a peripheral complex (V1) that hydrolyzes ATP and a membrane integral complex (V0) that transports protons across cellular membranes. V-ATPase is responsible for the acidification of various organelles, such as lysosomes, endosomes, the trans-Golgi network, and secretory granules, including synaptic vesicles. In certain cell types, can be exported to the plasma membrane, where it is involved in the acidification of the extracellular environment. Required for assembly and activity of the vacuolar ATPase. Through its action on compartment acidification, plays an essential role in neuronal development in terms of integrity and connectivity of neurons. This chain is V-type proton ATPase 116 kDa subunit a 1 (ATP6V0A1), found in Homo sapiens (Human).